Reading from the N-terminus, the 182-residue chain is Adenylate kinase (182 aa).

12-17 (GAGKGT) provides a ligand contact to ATP. Residues 32-61 (STGDLLRDEVSSGSVLGIKAAEIMNKGELV) form an NMP region. Residues Thr33, Arg38, 59 to 61 (ELV), 85 to 88 (GFPR), and Gln92 contribute to the AMP site. The tract at residues 126–132 (ERGRQDD) is LID. Arg127 is a binding site for ATP. AMP is bound by residues Arg129 and Arg140. Ala168 contributes to the ATP binding site.

This sequence belongs to the adenylate kinase family. In terms of assembly, monomer.

The protein resides in the cytoplasm. It catalyses the reaction AMP + ATP = 2 ADP. The protein operates within purine metabolism; AMP biosynthesis via salvage pathway; AMP from ADP: step 1/1. In terms of biological role, catalyzes the reversible transfer of the terminal phosphate group between ATP and AMP. Plays an important role in cellular energy homeostasis and in adenine nucleotide metabolism. The chain is Adenylate kinase from Prochlorococcus marinus (strain NATL2A).